Reading from the N-terminus, the 463-residue chain is L-seryl-tRNA(Sec) selenium transferase (463 aa).

N6-(pyridoxal phosphate)lysine is present on lysine 295.

The protein belongs to the SelA family. As to quaternary structure, homodecamer; pentamer of dimers. Binds only one seryl-tRNA(Sec) per dimer. It depends on pyridoxal 5'-phosphate as a cofactor.

The protein resides in the cytoplasm. It catalyses the reaction L-seryl-tRNA(Sec) + selenophosphate + H(+) = L-selenocysteinyl-tRNA(Sec) + phosphate. It functions in the pathway aminoacyl-tRNA biosynthesis; selenocysteinyl-tRNA(Sec) biosynthesis; selenocysteinyl-tRNA(Sec) from L-seryl-tRNA(Sec) (bacterial route): step 1/1. In terms of biological role, converts seryl-tRNA(Sec) to selenocysteinyl-tRNA(Sec) required for selenoprotein biosynthesis. The protein is L-seryl-tRNA(Sec) selenium transferase of Escherichia coli O127:H6 (strain E2348/69 / EPEC).